The following is a 109-amino-acid chain: Ribulose bisphosphate carboxylase small subunit (109 aa).

Belongs to the RuBisCO small chain family. Heterohexadecamer of 8 large and 8 small subunits.

It localises to the carboxysome. RuBisCO catalyzes two reactions: the carboxylation of D-ribulose 1,5-bisphosphate, the primary event in carbon dioxide fixation, as well as the oxidative fragmentation of the pentose substrate in the photorespiration process. Both reactions occur simultaneously and in competition at the same active site. Although the small subunit is not catalytic it is essential for maximal activity. This Prochlorothrix hollandica protein is Ribulose bisphosphate carboxylase small subunit.